Here is a 269-residue protein sequence, read N- to C-terminus: 4-hydroxy-tetrahydrodipicolinate reductase (269 aa).

NAD(+) is bound by residues 8–13 (GAAGRM) and Glu34. Arg35 serves as a coordination point for NADP(+). NAD(+)-binding positions include 98–100 (GTT) and 122–125 (APNY). Residue His155 is the Proton donor/acceptor of the active site. His156 is a binding site for (S)-2,3,4,5-tetrahydrodipicolinate. The Proton donor role is filled by Lys159. 165–166 (GT) lines the (S)-2,3,4,5-tetrahydrodipicolinate pocket.

This sequence belongs to the DapB family.

It is found in the cytoplasm. The enzyme catalyses (S)-2,3,4,5-tetrahydrodipicolinate + NAD(+) + H2O = (2S,4S)-4-hydroxy-2,3,4,5-tetrahydrodipicolinate + NADH + H(+). The catalysed reaction is (S)-2,3,4,5-tetrahydrodipicolinate + NADP(+) + H2O = (2S,4S)-4-hydroxy-2,3,4,5-tetrahydrodipicolinate + NADPH + H(+). The protein operates within amino-acid biosynthesis; L-lysine biosynthesis via DAP pathway; (S)-tetrahydrodipicolinate from L-aspartate: step 4/4. Catalyzes the conversion of 4-hydroxy-tetrahydrodipicolinate (HTPA) to tetrahydrodipicolinate. In Vibrio vulnificus (strain YJ016), this protein is 4-hydroxy-tetrahydrodipicolinate reductase.